A 200-amino-acid chain; its full sequence is MCRTLAAFPTTCLERAKEFKTRLGIFLHKSELGSDPASVGKFEWGSKHSKDGRNFSEDVLGWRESFDLLLSSKNGVAAFHTFLKTEFSEENLEFWLACEEFKKLRSATKLASRAHRIFEEFIRSEAPKEVNLDHETRELTRTNLQAATATCFDVAQGKTRTLMEKDSYPRFLKSPAYRDLAAQAASASPSSGSPAEPSHT.

Residues Cys2 and Cys12 are each lipidated (S-palmitoyl cysteine). The RGS domain occupies 65–181 (SFDLLLSSKN…LKSPAYRDLA (117 aa)). Phosphotyrosine is present on residues Tyr168 and Tyr177.

As to quaternary structure, interacts with GNAI1 and GNAQ. Interacts with GNAI3, GNAI3 and GNAO1. (Microbial infection) Interacts with porcine circovirus 2 ORF3 protein. In terms of processing, palmitoylated on Cys-2 and/or Cys-12. Phosphorylated. Phosphorylation at Tyr-168 by EGFR enhances GTPase accelerating (GAP) activity toward GNAI1.

It is found in the membrane. Regulates G protein-coupled receptor signaling cascades. Inhibits signal transduction by increasing the GTPase activity of G protein alpha subunits, thereby driving them into their inactive GDP-bound form. Plays an important role in the phototransduction cascade by regulating the lifetime and effective concentration of activated transducin alpha. May regulate extra and intracellular mitogenic signals. Its function is as follows. (Microbial infection) Gets inactivated and/or degraded by porcine circovirus 2 ORF3 protein, leading to enhanced expression of IL-6 and IL-8 in infected lymphocytes. This would explain chronic inflammatory response of PCV2 infected pigs. The chain is Regulator of G-protein signaling 16 (RGS16) from Sus scrofa (Pig).